The following is a 170-amino-acid chain: Fibroblast growth factor 2 (170 aa).

Residues 1–21 (VGGRGRGRGTAAAARREPGGA) are disordered. An omega-N-methylarginine; alternate mark is found at R4, R6, and R8. Residues R4, R6, and R8 each carry the symmetric dimethylarginine; alternate modification. The segment covering 9 to 21 (GTAAAARREPGGA) has biased composition (low complexity). N51 contacts heparin. Y97 carries the phosphotyrosine; by TEC modification. K110 participates in a covalent cross-link: Glycyl lysine isopeptide (Lys-Gly) (interchain with G-Cter in SUMO1). A heparin-binding region spans residues 143-159 (KRTGQYKLGSKTGPGQK).

This sequence belongs to the heparin-binding growth factors family. In terms of assembly, monomer. Homodimer. Interacts with FGFR1, FGFR2, FGFR3 and FGFR4. Affinity between fibroblast growth factors (FGFs) and their receptors is increased by heparan sulfate glycosaminoglycans that function as coreceptors. Interacts with CSPG4, FGFBP1 and TEC. Found in a complex with FGFBP1, FGF1 and FGF2. Interacts with FGFBP3. Interacts with integrin ITGAV:ITGB3; the interaction is required for FGF2 signaling. Interacts with SNORC (via the extracellular domain). Interacts with glypican GPC3. In terms of processing, the N-terminus of isoform 2 is blocked. Post-translationally, phosphorylation at Tyr-97 regulates FGF2 unconventional secretion.

It localises to the secreted. The protein resides in the nucleus. In terms of biological role, acts as a ligand for FGFR1, FGFR2, FGFR3 and FGFR4. Also acts as an integrin ligand which is required for FGF2 signaling. Binds to integrin ITGAV:ITGB3. Plays an important role in the regulation of cell survival, cell division, cell differentiation and cell migration. Functions as a potent mitogen in vitro. Can induce angiogenesis. Mediates phosphorylation of ERK1/2 and thereby promotes retinal lens fiber differentiation. The chain is Fibroblast growth factor 2 (FGF2) from Cavia porcellus (Guinea pig).